The sequence spans 412 residues: Serine/threonine transporter SstT (412 aa).

The next 10 membrane-spanning stretches (helical) occupy residues 16-36, 44-64, 82-102, 115-135, 141-161, 179-199, 217-237, 298-318, 330-350, and 357-377; these read LVAQ…FLPG, LGDL…FVLV, IIVL…LASF, TDVI…FNIV, ALLN…GFAF, VTLI…GLVA, LLVL…LIVF, MGGA…TLGI, LLAA…LLLI, and FGIS…IGVV.

Belongs to the dicarboxylate/amino acid:cation symporter (DAACS) (TC 2.A.23) family.

Its subcellular location is the cell inner membrane. It carries out the reaction L-serine(in) + Na(+)(in) = L-serine(out) + Na(+)(out). It catalyses the reaction L-threonine(in) + Na(+)(in) = L-threonine(out) + Na(+)(out). Involved in the import of serine and threonine into the cell, with the concomitant import of sodium (symport system). The chain is Serine/threonine transporter SstT from Stutzerimonas stutzeri (strain A1501) (Pseudomonas stutzeri).